The primary structure comprises 56 residues: Large ribosomal subunit protein bL33 (56 aa).

It belongs to the bacterial ribosomal protein bL33 family.

This chain is Large ribosomal subunit protein bL33, found in Ehrlichia canis (strain Jake).